A 183-amino-acid polypeptide reads, in one-letter code: Inner membrane-spanning protein YciB (183 aa).

The next 5 membrane-spanning stretches (helical) occupy residues 10–30 (LVIF…GALI), 50–70 (MHLI…VFHD), 72–92 (AFIK…LAVS), 118–138 (VTWY…YVAF), and 148–168 (FKVF…VIYL).

This sequence belongs to the YciB family.

The protein localises to the cell inner membrane. Plays a role in cell envelope biogenesis, maintenance of cell envelope integrity and membrane homeostasis. In Shewanella sediminis (strain HAW-EB3), this protein is Inner membrane-spanning protein YciB.